The following is a 163-amino-acid chain: Cyclic pyranopterin monophosphate synthase (163 aa).

Substrate is bound by residues 79 to 81 (LCH) and 118 to 119 (ME). Residue Asp-133 is part of the active site.

The protein belongs to the MoaC family. As to quaternary structure, homohexamer; trimer of dimers.

The catalysed reaction is (8S)-3',8-cyclo-7,8-dihydroguanosine 5'-triphosphate = cyclic pyranopterin phosphate + diphosphate. It participates in cofactor biosynthesis; molybdopterin biosynthesis. Functionally, catalyzes the conversion of (8S)-3',8-cyclo-7,8-dihydroguanosine 5'-triphosphate to cyclic pyranopterin monophosphate (cPMP). The polypeptide is Cyclic pyranopterin monophosphate synthase (Nocardioides sp. (strain ATCC BAA-499 / JS614)).